A 748-amino-acid chain; its full sequence is Methylmalonyl-CoA mutase, mitochondrial (748 aa).

The transit peptide at 1 to 30 directs the protein to the mitochondrion; that stretch reads MLRAKNQLFLLSPHYLKQLNIPSASRWKRL. Q48 contributes to the malonyl-CoA binding site. The residue at position 87 (K87) is an N6-acetyllysine. Malonyl-CoA contacts are provided by residues 94–97 and 104–108; these read YPTM and TIRQY. Residue K210 is modified to N6-acetyllysine. Residues 214–216, R226, K253, H263, and 302–304 each bind malonyl-CoA; these read TIQ and RLS. K333 bears the N6-acetyllysine mark. K341 carries the post-translational modification N6-succinyllysine. S479 is modified (phosphoserine). An N6-succinyllysine modification is found at K593. K600 is subject to N6-acetyllysine. The B12-binding domain occupies 612–744; the sequence is RPRLLVAKMG…DDIEKCLAEK (133 aa). An adenosylcob(III)alamin-binding site is contributed by H625.

It belongs to the methylmalonyl-CoA mutase family. As to quaternary structure, homodimer. Interacts (the apoenzyme form) with MMAA; the interaction is GTP dependent. Adenosylcob(III)alamin is required as a cofactor.

The protein localises to the mitochondrion matrix. Its subcellular location is the mitochondrion. It localises to the cytoplasm. It carries out the reaction (R)-methylmalonyl-CoA = succinyl-CoA. Inhibited by itaconyl-CoA, a metabolite that inactivates the coenzyme B12 cofactor. In terms of biological role, catalyzes the reversible isomerization of methylmalonyl-CoA (MMCoA) (generated from branched-chain amino acid metabolism and degradation of dietary odd chain fatty acids and cholesterol) to succinyl-CoA (3-carboxypropionyl-CoA), a key intermediate of the tricarboxylic acid cycle. The protein is Methylmalonyl-CoA mutase, mitochondrial (Mmut) of Mus musculus (Mouse).